Here is a 523-residue protein sequence, read N- to C-terminus: 2-oxopropyl-CoM reductase, carboxylating (523 aa).

Position 53 to 54 (53 to 54) interacts with FAD; it reads AA. Arg56 is a 2-oxopropyl-coenzyme M binding site. Residue Ser81 coordinates FAD. Cys82 lines the 2-oxopropyl-coenzyme M pocket. Cys82 and Cys87 are joined by a disulfide. Ala158 lines the FAD pocket. Residues 222 to 225 and 245 to 246 each bind NADP(+); these read GSKT and RT. Asp353 lines the FAD pocket. Residue Glu360 participates in NADP(+) binding. Position 361 (Met361) interacts with FAD. Arg365 is a 2-oxopropyl-coenzyme M binding site. Residue Phe501 coordinates FAD.

It belongs to the class-I pyridine nucleotide-disulfide oxidoreductase family. As to quaternary structure, homodimer. Component II of the aliphatic epoxide carboxylation complex together with components I, III and IV. Requires FAD as cofactor.

It carries out the reaction coenzyme M + acetoacetate + NADP(+) = 2-oxopropyl-coenzyme M + CO2 + NADPH. Its pathway is alkene metabolism; propylene degradation. With respect to regulation, inhibited (at 40%) by the coenzyme M analog 2-bromoethanesulfonate (BES). BES is a time-dependent inactivator of dithiothreitol-reduced 2-KPCC, where the redox active cysteines are in the free thiol forms. BES does not inactivate air-oxidized 2-KPCC, where the redox active cysteine pair is in the disulfide form. BES specifically alkylates the interchange thiol that facilitates thioether bond cleavage and enolacetone formation during catalysis. Functionally, involved in aliphatic epoxide carboxylation. Catalyzes the reductive cleavage of the thioether bond of 2-oxopropyl-coenzyme M (2-KPC), and the subsequent carboxylation of the ketopropyl cleavage product, yielding the products acetoacetate and free coenzyme M. This Xanthobacter autotrophicus (strain ATCC BAA-1158 / Py2) protein is 2-oxopropyl-CoM reductase, carboxylating.